The sequence spans 75 residues: Large ribosomal subunit protein bL31 (75 aa).

The protein belongs to the bacterial ribosomal protein bL31 family. Type A subfamily. Part of the 50S ribosomal subunit.

Functionally, binds the 23S rRNA. The polypeptide is Large ribosomal subunit protein bL31 (Acidiphilium cryptum (strain JF-5)).